Reading from the N-terminus, the 360-residue chain is S-adenosylmethionine-dependent nucleotide dehydratase RSAD2 (360 aa).

Positions Lys-44–Pro-71 are disordered. Residues Val-49–Pro-63 show a composition bias toward basic and acidic residues. The 221-residue stretch at Pro-68–Leu-288 folds into the Radical SAM core domain. Positions 82, 86, and 89 each coordinate [4Fe-4S] cluster. Lys-196 bears the N6-acetyllysine mark. A Glycyl lysine isopeptide (Lys-Gly) (interchain with G-Cter in ubiquitin) cross-link involves residue Lys-205.

This sequence belongs to the radical SAM superfamily. RSAD2 family. Homodimer. Interacts with IRAK1 and TRAF6. Interacts with FPPS. Interacts with HADHB. Interacts (via C-terminus) with VAPA/VAP33 (via C-terminus). [4Fe-4S] cluster serves as cofactor. Post-translationally, acetylated by HAT1. HAT1-mediated acetylation of Lys-196 in turn recruits UBE4A that stimulates RSAD2 polyubiquitination leading to proteasomal degradation. In terms of processing, 'Lys-6'-linked polyubiquitination at Lys-205 leads to RSAD2 protein degradation. As to expression, in neonatal rat tibia, specifically localized in cells of the periosteum, in osteoblasts lining endosteal and peristeal bone surfaces, to articular surfaces of cartilage and in perichondral cells but not in chondrocytes (at protein level). Expressed predominantly in bone marrow and spleen.

Its subcellular location is the endoplasmic reticulum membrane. It is found in the golgi apparatus. It localises to the endoplasmic reticulum. The protein localises to the lipid droplet. The protein resides in the mitochondrion. Its subcellular location is the mitochondrion inner membrane. It is found in the mitochondrion outer membrane. The enzyme catalyses CTP + AH2 + S-adenosyl-L-methionine = 3'-deoxy-3',4'-didehydro-CTP + 5'-deoxyadenosine + L-methionine + A + H2O + H(+). With respect to regulation, IRAK1 and TRAF6 synergistically activate RSAD2 increasing its activity with CTP as substrate about 10-fold. Interferon-inducible antiviral protein which plays a major role in the cell antiviral state induced by type I and type II interferon. Catalyzes the conversion of cytidine triphosphate (CTP) to 3'-deoxy-3',4'-didehydro-CTP (ddhCTP) via a SAM-dependent radical mechanism. In turn, ddhCTP acts as a chain terminator for the RNA-dependent RNA polymerases from multiple viruses and directly inhibits viral replication. Therefore, inhibits a wide range of DNA and RNA viruses. Also promotes TLR7 and TLR9-dependent production of IFN-beta production in plasmacytoid dendritic cells (pDCs) by facilitating 'Lys-63'-linked ubiquitination of IRAK1 by TRAF6. Plays a role in CD4+ T-cells activation and differentiation. Facilitates T-cell receptor (TCR)-mediated GATA3 activation and optimal T-helper 2 (Th2) cytokine production by modulating NFKB1 and JUNB activities. Can inhibit secretion of soluble proteins. This chain is S-adenosylmethionine-dependent nucleotide dehydratase RSAD2, found in Rattus norvegicus (Rat).